Reading from the N-terminus, the 1090-residue chain is Protein transport protein Sec24A (1090 aa).

Disordered stretches follow at residues 1–260 (MAQP…AHNT) and 272–325 (TPQL…TQTP). The segment covering 8 to 28 (AARGAAASLQAQNGAASASGS) has biased composition (low complexity). Composition is skewed to polar residues over residues 29 to 55 (PYTN…SQPP), 138 to 151 (WQYN…QTNH), and 162 to 184 (GNPN…QTSF). Residues 194-236 (QNPPLPPTFQPGAPPGPPPAGGPPPSRGPAPQKTPPRAAPPPS) show a composition bias toward pro residues. 3 stretches are compositionally biased toward polar residues: residues 237–258 (FNSA…TAAH), 274–286 (QLVN…SRSV), and 313–325 (SYPS…TQTP). Zn(2+) contacts are provided by Cys-428, Cys-431, Cys-449, and Cys-452. The segment at 428-452 (CRSCRTYINPFVNFLDQRRWKCNLC) is zinc finger-like. One copy of the Gelsolin-like repeat lies at 963–1036 (PQPPILQLSV…PESARIAAFI (74 aa)).

The protein belongs to the SEC23/SEC24 family. SEC24 subfamily. In terms of assembly, COPII is composed of at least five proteins: the Sec23/24 complex, the Sec13/31 complex and Sar1. Interacts with TMED2. Interacts (as part of the Sec23/24 complex) with SEC22B; recruits SEC22B into COPII-coated vesicles for its transport from the endoplasmic reticulum to the Golgi. Interacts with STING1; promoting STING1 translocation to COPII vesicles in a STEEP1-dependent manner. Interacts with TMEM39A. Interacts with SACM1L; this interaction is reduced in the absence of TMEM39A. Interacts with kinase FAM20C; transport of FAM20C from the endoplasmic reticulum to the Golgi is likely to be mediated by COPII vesicles.

It localises to the cytoplasmic vesicle. Its subcellular location is the COPII-coated vesicle membrane. The protein localises to the endoplasmic reticulum membrane. The protein resides in the cytoplasm. It is found in the cytosol. Component of the coat protein complex II (COPII) which promotes the formation of transport vesicles from the endoplasmic reticulum (ER). The coat has two main functions, the physical deformation of the endoplasmic reticulum membrane into vesicles and the selection of cargo molecules for their transport to the Golgi complex. Plays a central role in cargo selection within the COPII complex and together with SEC24B may have a different specificity compared to SEC24C and SEC24D. May package preferentially cargos with cytoplasmic DxE or LxxLE motifs and may also recognize conformational epitopes. In Mus musculus (Mouse), this protein is Protein transport protein Sec24A.